The chain runs to 277 residues: Radial spoke head protein 9 homolog (277 aa).

It belongs to the flagellar radial spoke RSP9 family. Component of axonemal radial spoke complexes.

It is found in the cytoplasm. The protein resides in the cytoskeleton. The protein localises to the cilium axoneme. It localises to the flagellum axoneme. Its subcellular location is the cell projection. It is found in the kinocilium. Functionally, functions as part of axonemal radial spoke complexes that play an important part in the motility of sperm and cilia. Essential for both the radial spoke head assembly and the central pair microtubule stability in ependymal motile cilia. Required for motility of olfactory and neural cilia and for the structural integrity of ciliary axonemes in both 9+0 and 9+2 motile cilia. This is Radial spoke head protein 9 homolog (rsph9) from Xenopus tropicalis (Western clawed frog).